The following is a 437-amino-acid chain: Chaperone SurA (437 aa).

The first 27 residues, 1–27 (MHNHVFKTIARHGLIALFFFFSISAMA), serve as a signal peptide directing secretion. PpiC domains follow at residues 179–280 (QDEF…KLLN) and 290–388 (VDQT…QVLE).

It is found in the periplasm. It catalyses the reaction [protein]-peptidylproline (omega=180) = [protein]-peptidylproline (omega=0). In terms of biological role, chaperone involved in the correct folding and assembly of outer membrane proteins. Recognizes specific patterns of aromatic residues and the orientation of their side chains, which are found more frequently in integral outer membrane proteins. May act in both early periplasmic and late outer membrane-associated steps of protein maturation. The protein is Chaperone SurA of Methylobacillus flagellatus (strain ATCC 51484 / DSM 6875 / VKM B-1610 / KT).